Here is a 382-residue protein sequence, read N- to C-terminus: Na(+)/H(+) antiporter NhaA (382 aa).

11 consecutive transmembrane segments (helical) span residues 14 to 34, 49 to 69, 87 to 107, 117 to 137, 146 to 166, 171 to 191, 205 to 225, 252 to 272, 285 to 305, 321 to 341, and 356 to 376; these read AGGILLVIAAAIAMMIANSSL, MSVSHWINDGLMAVFFLLIGL, IFPAIAAVGGMLAPALVYVAF, GWAIPAATDIAFALGIMALLG, VFLLALAIIDDLGVVVIIAFF, LSVLALVIGFVMTGLLFLLNA, FILWVSVLQSGVHATLAGVVL, VAFAILPVFAFANAGISLEGV, VALGLFLGKPLGIFSFSYLAV, IFAVSVLCGIGFTMSIFISSL, and LGILMGSTFAAVVGYALLSIS.

This sequence belongs to the NhaA Na(+)/H(+) (TC 2.A.33) antiporter family.

It is found in the cell inner membrane. The catalysed reaction is Na(+)(in) + 2 H(+)(out) = Na(+)(out) + 2 H(+)(in). Functionally, na(+)/H(+) antiporter that extrudes sodium in exchange for external protons. In Aliivibrio fischeri (strain ATCC 700601 / ES114) (Vibrio fischeri), this protein is Na(+)/H(+) antiporter NhaA.